The chain runs to 71 residues: Conotoxin Bu24 (71 aa).

A signal peptide spans 1–21 (MGMRMMVTVFLLVVLATTVVS). The propeptide occupies 22-44 (LRSNRASDGRRGIVNKLNDLVPK). The residue at position 70 (Asn70) is an Asparagine amide.

It belongs to the conotoxin A superfamily. Post-translationally, contains 3 disulfide bonds. They are not indicated here, since framework IV presents two different connectivities (I-V, II-III, IV-VI and I-III, II-V, IV-VI). In terms of tissue distribution, expressed by the venom duct.

The protein localises to the secreted. The protein is Conotoxin Bu24 of Conus bullatus (Bubble cone).